Here is a 1028-residue protein sequence, read N- to C-terminus: MMLSWKQLILLSFIGCLAGELLLQGPVFIKEPSNSIFPVDSEDKKITLNCEARGNPSPHYRWQLNGSDIDTSLDHRYKLNGGNLIVINPNRNWDTGSYQCFATNSLGTIVSREAKLQFAYLENFKTRMRSTVSVREGQGVVLLCGPPPHSGELSYAWVFNEYPSFVEEDSRRFVSQETGHLYIAKVEPSDVGNYTCVVTSTVTNTRVLGSPTPLVLRSDGVMGEYEPKIEVQFPETLPAAKGSTVRLECFALGNPVPQINWRRSDGMPFPNKIKLRKFNGMLEIQNFQQEDTGSYECIAENSRGKNVARGRLTYYAKPYWLQLLRDVEIAVEDSLYWECRASGKPKPSYRWLKNGDALVLEERIQIENGALTITNLNVTDSGMFQCIAENKHGLIYSSAELKVVASAPDFSRNPMKKMVQVQVGSLVILDCKPRASPRALSFWKKGDMMVREQARVSFLNDGGLKIMNVTKADAGTYTCTAENQFGKANGTTHLVVTEPTRIILAPSNMDVAVGESVILPCQVQHDPLLDIMFAWYFNGALTDFKKDGSHFEKVGGSSSGDLMIRNIQLKHSGKYVCMVQTGVDSVSSAAELIVRGSPGPPENVKVDEITDTTAQLSWTEGTDSHSPVISYAVQARTPFSVGWQSVRTVPEVIDGKTHTATVVELNPWVEYEFRIVASNKIGGGEPSLPSEKVRTEEAAPEIAPSEVSGGGGSRSELVITWDPVPEELQNGGGFGYVVAFRPLGVTTWIQTVVTSPDNPRYVFRNESIVPFSPYEVKVGVYNNKGEGPFSPVTTVFSAEEEPTVAPSHISAHSLSSSEIEVSWNTIPWKLSNGHLLGYEVRYWNNGGEEESSRKVKVAGNQTSAVLRGLKSNLAYYTAVRAYNSAGAGPFSATVNATTKKTPPSQPPGNVVWNATDTKVLLNWEQVKAMENESEVTGYKVFYRTSSQNNVHVLNTNKTSAELLLPIKEDYIIEVKATTDGGDGTSSEQIRIPRITSMDARGSTSAISNIHPLSGYMSVLLFFIVNALW.

Residues 1–19 (MMLSWKQLILLSFIGCLAG) form the signal peptide. Ig-like C2-type domains follow at residues 32-117 (PSNS…AKLQ), 122-209 (ENFK…RVLG), 227-313 (PKIE…GRLT), 318-402 (PYWL…AELK), 408-497 (PDFS…LVVT), and 499-593 (PTRI…AELI). Disulfide bonds link C50-C100, C144-C196, C249-C297, C339-C386, and C431-C479. N65 and N193 each carry an N-linked (GlcNAc...) asparagine glycan. N377, N468, and N489 each carry an N-linked (GlcNAc...) asparagine glycan. C521 and C577 are joined by a disulfide. Fibronectin type-III domains follow at residues 600-698 (PPEN…TEEA), 703-800 (APSE…SAEE), 805-901 (APSH…TKKT), and 902-998 (PPSQ…TSMD). The segment at 684-714 (GEPSLPSEKVRTEEAAPEIAPSEVSGGGGSR) is disordered. N765, N860, N895, N913, N931, and N956 each carry an N-linked (GlcNAc...) asparagine glycan. Residue S1002 is the site of GPI-anchor amidated serine attachment. Positions 1003–1028 (TSAISNIHPLSGYMSVLLFFIVNALW) are cleaved as a propeptide — removed in mature form.

It belongs to the immunoglobulin superfamily. Contactin family. As to quaternary structure, interacts with PTPRG. In terms of tissue distribution, specifically expressed in brain. Ectopically expressed in tumors expressing endogenous intracisternal A-type particles (IAPs).

It is found in the cell membrane. Functionally, contactins mediate cell surface interactions during nervous system development. Has some neurite outgrowth-promoting activity. This is Contactin-3 (Cntn3) from Mus musculus (Mouse).